We begin with the raw amino-acid sequence, 225 residues long: MPIFTGSSSDSEDERTIHKTTKLFTRQRSIHSIFGGGKVADILLWREPKIAATLVIGVSILWFLMEVVEYNFITLICHASMTSMLFFFIWSTASDFLNWERPLIPEVVLDESSFKQLARSFHVRFNQILTKLLDVACGRDPPLFFLTTISLYIVSIIGTYFNFVNLLFIGFVSMQTLPVMYEMYEDDVDTAAGKLMRKMKKLYKKVDTNVLSKIPRGTVKNKKFT.

In terms of domain architecture, Reticulon spans 39 to 224 (VADILLWREP…PRGTVKNKKF (186 aa)). 3 helical membrane passes run 50–70 (IAATLVIGVSILWFLMEVVEY), 72–92 (FITLICHASMTSMLFFFIWST), and 152–172 (YIVSIIGTYFNFVNLLFIGFV).

Its subcellular location is the endoplasmic reticulum membrane. In Arabidopsis thaliana (Mouse-ear cress), this protein is Reticulon-like protein B9 (RTNLB9).